Here is a 238-residue protein sequence, read N- to C-terminus: Thrombin-like enzyme halystase (238 aa).

Residues 1-229 (IIGGDECNIN…HLDWIKSIIA (229 aa)) enclose the Peptidase S1 domain. 6 cysteine pairs are disulfide-bonded: cysteine 7-cysteine 141, cysteine 28-cysteine 44, cysteine 76-cysteine 236, cysteine 120-cysteine 190, cysteine 152-cysteine 169, and cysteine 180-cysteine 205. Histidine 43 functions as the Charge relay system in the catalytic mechanism. The N-linked (GlcNAc...) asparagine glycan is linked to asparagine 81. Aspartate 88 serves as the catalytic Charge relay system. Asparagine 100 is a glycosylation site (N-linked (GlcNAc...) asparagine). The Charge relay system role is filled by serine 184.

It belongs to the peptidase S1 family. Snake venom subfamily. In terms of assembly, monomer. In terms of tissue distribution, expressed by the venom gland.

The protein localises to the secreted. Its activity is regulated as follows. Inhibited by diisopropylfluorophosphate (DFP), PMSF and leupeptin. Functionally, thrombin-like snake venom serine protease. Cleaves fibrinogen (beta chain of fibrinogen (FGB) and more slowly alpha chain (FGA)) without inducing fibrin clotting and cleaves kininogen to produce bradykinin (KNG), resulting in the reduction of blood pressure. The sequence is that of Thrombin-like enzyme halystase from Gloydius blomhoffii (Mamushi).